The following is a 439-amino-acid chain: Probable threonine protease PRSS50 (439 aa).

2 disordered regions span residues 1–22 (MEPW…VPGA) and 48–130 (ERIR…TMAP). The first 47 residues, 1–47 (MEPWCGAEVRGQGPQGPRVPGASRSRSRALLLLLLLLLLLLPRRPAG), serve as a signal peptide directing secretion. Residues 9-21 (VRGQGPQGPRVPG) show a composition bias toward low complexity. Over 48–415 (ERIRPRRPPR…WIWDRLSGEP (368 aa)) the chain is Extracellular. The segment covering 51–61 (RPRRPPRHAHP) has biased composition (basic residues). Residues 112-127 (QAQTNQTTTAPPNSQT) are compositionally biased toward low complexity. N-linked (GlcNAc...) asparagine glycosylation is found at asparagine 116 and asparagine 187. In terms of domain architecture, Peptidase S1 spans 157–412 (FCGSSHEPDP…YRPWIWDRLS (256 aa)). Cysteines 192 and 208 form a disulfide. Histidine 207 (charge relay system) is an active-site residue. An N-linked (GlcNAc...) asparagine glycan is attached at asparagine 226. Aspartate 260 acts as the Charge relay system in catalysis. 3 cysteine pairs are disulfide-bonded: cysteine 294–cysteine 370, cysteine 327–cysteine 350, and cysteine 360–cysteine 388. Residue threonine 364 is the Charge relay system of the active site. Residues 416 to 436 (LALPAPSRTLLLAFLLLLILL) form a helical membrane-spanning segment. The Cytoplasmic segment spans residues 437-439 (GTL).

It belongs to the peptidase S1 family.

It is found in the membrane. In terms of biological role, may be involved in proteolysis through its threonine endopeptidase activity. The sequence is that of Probable threonine protease PRSS50 (Prss50) from Mus musculus (Mouse).